We begin with the raw amino-acid sequence, 592 residues long: V-type ATP synthase alpha chain (592 aa).

232–239 (GPFGAGKT) is a binding site for ATP.

Belongs to the ATPase alpha/beta chains family.

It catalyses the reaction ATP + H2O + 4 H(+)(in) = ADP + phosphate + 5 H(+)(out). Produces ATP from ADP in the presence of a proton gradient across the membrane. The V-type alpha chain is a catalytic subunit. This chain is V-type ATP synthase alpha chain, found in Clostridium botulinum (strain Alaska E43 / Type E3).